A 278-amino-acid polypeptide reads, in one-letter code: Probable CCR4-associated factor 1 homolog 5 (278 aa).

A divalent metal cation contacts are provided by aspartate 30, glutamate 32, aspartate 145, and aspartate 217.

This sequence belongs to the CAF1 family. As to quaternary structure, component of the CCR4-NOT complex, at least composed of CRR4 and CAF1 proteins. A divalent metal cation is required as a cofactor.

The protein localises to the nucleus. It localises to the cytoplasm. The catalysed reaction is Exonucleolytic cleavage of poly(A) to 5'-AMP.. Its function is as follows. Ubiquitous transcription factor required for a diverse set of processes. It is a component of the CCR4 complex involved in the control of gene expression. This Arabidopsis thaliana (Mouse-ear cress) protein is Probable CCR4-associated factor 1 homolog 5 (CAF1-5).